The sequence spans 346 residues: Biotin synthase (346 aa).

Residues 38–256 (QQVQVSTLLS…IAVARIMMPT (219 aa)) enclose the Radical SAM core domain. Residues C53, C57, and C60 each contribute to the [4Fe-4S] cluster site. Residues C97, C128, C188, and R260 each coordinate [2Fe-2S] cluster.

It belongs to the radical SAM superfamily. Biotin synthase family. Homodimer. [4Fe-4S] cluster serves as cofactor. [2Fe-2S] cluster is required as a cofactor.

The enzyme catalyses (4R,5S)-dethiobiotin + (sulfur carrier)-SH + 2 reduced [2Fe-2S]-[ferredoxin] + 2 S-adenosyl-L-methionine = (sulfur carrier)-H + biotin + 2 5'-deoxyadenosine + 2 L-methionine + 2 oxidized [2Fe-2S]-[ferredoxin]. It participates in cofactor biosynthesis; biotin biosynthesis; biotin from 7,8-diaminononanoate: step 2/2. Catalyzes the conversion of dethiobiotin (DTB) to biotin by the insertion of a sulfur atom into dethiobiotin via a radical-based mechanism. The polypeptide is Biotin synthase (Salmonella dublin (strain CT_02021853)).